The primary structure comprises 345 residues: Dihydroorotase (345 aa).

Residues histidine 13 and histidine 15 each contribute to the Zn(2+) site. Residues 15–17 (HLR) and asparagine 41 each bind substrate. Lysine 100, histidine 137, and histidine 175 together coordinate Zn(2+). Lysine 100 is subject to N6-carboxylysine. Residue histidine 137 participates in substrate binding. Leucine 220 is a substrate binding site. Aspartate 248 is a binding site for Zn(2+). Aspartate 248 is a catalytic residue. 2 residues coordinate substrate: histidine 252 and alanine 264.

It belongs to the metallo-dependent hydrolases superfamily. DHOase family. Class II DHOase subfamily. Homodimer. Zn(2+) is required as a cofactor.

The catalysed reaction is (S)-dihydroorotate + H2O = N-carbamoyl-L-aspartate + H(+). It participates in pyrimidine metabolism; UMP biosynthesis via de novo pathway; (S)-dihydroorotate from bicarbonate: step 3/3. In terms of biological role, catalyzes the reversible cyclization of carbamoyl aspartate to dihydroorotate. This chain is Dihydroorotase, found in Laribacter hongkongensis (strain HLHK9).